Here is a 747-residue protein sequence, read N- to C-terminus: MTDTSDARPPHSDDKTRSHSESENPAIDSPEPKVHAPLTNKDWWPEQVDVSVLHKQNEKGNPLGEDFDYATEFAKLDVEAFKRDVIDLINTSQDWWPADYGSYAGLFIRMSWHAAGTYRIFDGRGGAGQGSQRFAPLNSWPDNANLDKARRLLWPIKRKYGNKISWADLIAYAGNAALESAGFQTFGFAFGREDIWEPEEMLWGQEDTWLGTDKRYGGTNDSDTRELAEPFGATTMGLIYVNPEGPEGKPDPLAAAHDIRETFGRMAMNDEETAALIVGGHTLGKTHGAADVNVGPEPEGAPIEQQGLGWKCPFGTGNAGDTVTSGLEVVWTTTPTKWSNAYLELLYGYEWELTKSPGGAWQFEAKDAEAIIPDPFGGPPRKPTMLVTDVSMRVDPIYGPITRRWLDHPEEMNEAFAKAWYKLMHRDMGPVSRYLGPWVAEPQLWQDPVPAVDHELIDESDIAALKAAVLQSGLSVPQLVKTAWASASSFRGTDKRGGANGARLRLEPQRSWEANEPSELDKVLPVLERIQQDFNASATGGKKVSLADLIVLAGSAAVEKAAKDGGYEISVHFAPGRTDASQEQTDVDSFAVLEPRADGFRNFARPGEKTPLEQLLVDKAYFLDLTAPEMTALIGGLRTLNANHGGSKHGVFTERPGVLSNDFFVNLLDMGTEWKPSELTENVYDGKDRATGQPKWTATAADLVFGSNSVLRAVVEVYAQDDNQGKFVEDFVAAWVKVMNNDRFDLG.

The span at 1–22 (MTDTSDARPPHSDDKTRSHSES) shows a compositional bias: basic and acidic residues. A disordered region spans residues 1–39 (MTDTSDARPPHSDDKTRSHSESENPAIDSPEPKVHAPLT). Residues 112 to 240 (WHAAGTYRIF…FGATTMGLIY (129 aa)) constitute a cross-link (tryptophyl-tyrosyl-methioninium (Trp-Tyr) (with M-266)). His113 functions as the Proton acceptor in the catalytic mechanism. Positions 240-266 (YVNPEGPEGKPDPLAAAHDIRETFGRM) form a cross-link, tryptophyl-tyrosyl-methioninium (Tyr-Met) (with W-112). Heme b is bound at residue His281.

Belongs to the peroxidase family. Peroxidase/catalase subfamily. As to quaternary structure, homodimer or homotetramer. Heme b is required as a cofactor. In terms of processing, formation of the three residue Trp-Tyr-Met cross-link is important for the catalase, but not the peroxidase activity of the enzyme.

It carries out the reaction H2O2 + AH2 = A + 2 H2O. The enzyme catalyses 2 H2O2 = O2 + 2 H2O. Functionally, bifunctional enzyme with both catalase and broad-spectrum peroxidase activity. The polypeptide is Catalase-peroxidase 1 (Mycolicibacterium vanbaalenii (strain DSM 7251 / JCM 13017 / BCRC 16820 / KCTC 9966 / NRRL B-24157 / PYR-1) (Mycobacterium vanbaalenii)).